The chain runs to 600 residues: Molybdenum cofactor biosynthesis protein moc-5 (600 aa).

Residues 4-371 (RAGKKLFQWS…AVNNKKARHA (368 aa)) form a molybdenum cofactor biosynthesis protein A region. Residues 68-284 (MFMREHTYLR…VDKYGDGVIR (217 aa)) form the Radical SAM core domain. Arg-77 serves as a coordination point for GTP. Cys-84 and Cys-88 together coordinate [4Fe-4S] cluster. S-adenosyl-L-methionine is bound at residue Tyr-90. Cys-91 provides a ligand contact to [4Fe-4S] cluster. Arg-127 is a binding site for GTP. Residue Gly-131 coordinates S-adenosyl-L-methionine. Thr-158 contacts GTP. S-adenosyl-L-methionine is bound at residue Ser-182. Lys-218 contributes to the GTP binding site. Residue Met-252 participates in S-adenosyl-L-methionine binding. [4Fe-4S] cluster-binding residues include Cys-316 and Cys-319. 321-323 (RLR) is a GTP binding site. Cys-333 serves as a coordination point for [4Fe-4S] cluster. Residues 369 to 390 (RHAVFRNGRSEEPAKSSNDSYR) form a disordered region. Residues 396–595 (TSASSILVHL…SGGKTTYTID (200 aa)) form a molybdenum cofactor biosynthesis protein C region. The For molybdenum cofactor biosynthesis protein C activity role is filled by Asp-566.

It in the C-terminal section; belongs to the MoaC family. The protein in the N-terminal section; belongs to the radical SAM superfamily. MoaA family. In terms of assembly, isoform a and isoform b probably form a heterooligomer. The cofactor is [4Fe-4S] cluster.

The catalysed reaction is GTP + AH2 + S-adenosyl-L-methionine = (8S)-3',8-cyclo-7,8-dihydroguanosine 5'-triphosphate + 5'-deoxyadenosine + L-methionine + A + H(+). It carries out the reaction (8S)-3',8-cyclo-7,8-dihydroguanosine 5'-triphosphate = cyclic pyranopterin phosphate + diphosphate. Its pathway is cofactor biosynthesis; molybdopterin biosynthesis. Functionally, probably forms a complex with isoform b that catalyzes the conversion of 5'-GTP to cyclic pyranopterin monophosphate (cPMP). Catalyzes the cyclization of GTP to (8S)-3',8-cyclo-7,8-dihydroguanosine 5'-triphosphate and mocs1b catalyzes the subsequent conversion of (8S)-3',8-cyclo-7,8-dihydroguanosine 5'-triphosphate to cPMP. In terms of biological role, probably forms a complex with isoform a that catalyzes the conversion of 5'-GTP to cyclic pyranopterin monophosphate (cPMP). In Caenorhabditis elegans, this protein is Molybdenum cofactor biosynthesis protein moc-5.